Reading from the N-terminus, the 345-residue chain is V-type proton ATPase subunit d (345 aa).

Met1 carries the N-acetylmethionine modification.

Belongs to the V-ATPase V0D/AC39 subunit family. As to quaternary structure, V-ATPase is a heteromultimeric enzyme composed of a peripheral catalytic V1 complex (components A to H) attached to an integral membrane V0 proton pore complex (components: a, c, c', c'', d, e, f and VOA1).

It localises to the vacuole membrane. Its function is as follows. Subunit of the V0 complex of vacuolar(H+)-ATPase (V-ATPase), a multisubunit enzyme composed of a peripheral complex (V1) that hydrolyzes ATP and a membrane integral complex (V0) that translocates protons. V-ATPase is responsible for acidifying and maintaining the pH of intracellular compartments. This subunit is a non-integral membrane component of the membrane pore domain and is required for proper assembly of the V0 sector. Might be involved in the regulated assembly of V1 subunits onto the membrane sector or alternatively may prevent the passage of protons through V0 pores. The protein is V-type proton ATPase subunit d of Saccharomyces cerevisiae (strain ATCC 204508 / S288c) (Baker's yeast).